Reading from the N-terminus, the 157-residue chain is Transcription elongation factor GreA (157 aa).

The protein belongs to the GreA/GreB family.

Functionally, necessary for efficient RNA polymerase transcription elongation past template-encoded arresting sites. The arresting sites in DNA have the property of trapping a certain fraction of elongating RNA polymerases that pass through, resulting in locked ternary complexes. Cleavage of the nascent transcript by cleavage factors such as GreA or GreB allows the resumption of elongation from the new 3'terminus. GreA releases sequences of 2 to 3 nucleotides. The protein is Transcription elongation factor GreA of Caulobacter sp. (strain K31).